The following is a 556-amino-acid chain: Formate--tetrahydrofolate ligase 1 (556 aa).

ATP is bound at residue 65–72; it reads TPAGEGKS.

Belongs to the formate--tetrahydrofolate ligase family.

It catalyses the reaction (6S)-5,6,7,8-tetrahydrofolate + formate + ATP = (6R)-10-formyltetrahydrofolate + ADP + phosphate. It participates in one-carbon metabolism; tetrahydrofolate interconversion. In Streptococcus pyogenes serotype M4 (strain MGAS10750), this protein is Formate--tetrahydrofolate ligase 1.